The primary structure comprises 403 residues: MSAKRRLFTSESVTEGHPDKICDQISDAILDAILEKDPNARVACETSVTTGLVLVSGEITTSTYVDIPRIVRDTVREIGYTRAKYGFDADTCAVLTSIDEQSPDIAMGVDRALEAREGQMTDEEIEAIGAGDQGLMFGFACNETEELMPMPISLAHRLARRLAEVRKTDVLPYLRPDGKTQVTIEYDENGKPVRVDTIVVSAQHHPEITQEQIQRDIKEQVIKPVVPAELLDENTKYFINPTGRFVIGGPQGDAGLTGRKIIVDTYGGYARHGGGAFSGKDPTKVDRSAAYAARYVAKNIVAAGLADKCEVQLAYAIGVARPVSISIDTFGTGKVSEDILIEVVRNNFDLRPAGIIKMLDLRRPIYKQTAAYGHFGRTDIDLPWERTDKAALLKEQALALADK.

Residue histidine 17 participates in ATP binding. Aspartate 19 provides a ligand contact to Mg(2+). Glutamate 45 is a binding site for K(+). Residues glutamate 58 and glutamine 101 each coordinate L-methionine. The tract at residues 101 to 111 (QSPDIAMGVDR) is flexible loop. ATP contacts are provided by residues 177–179 (DGK), 244–245 (RF), aspartate 253, 259–260 (RK), alanine 276, and lysine 280. Residue aspartate 253 participates in L-methionine binding. Position 284 (lysine 284) interacts with L-methionine.

This sequence belongs to the AdoMet synthase family. As to quaternary structure, homotetramer; dimer of dimers. It depends on Mg(2+) as a cofactor. Requires K(+) as cofactor.

It is found in the cytoplasm. It carries out the reaction L-methionine + ATP + H2O = S-adenosyl-L-methionine + phosphate + diphosphate. Its pathway is amino-acid biosynthesis; S-adenosyl-L-methionine biosynthesis; S-adenosyl-L-methionine from L-methionine: step 1/1. Its function is as follows. Catalyzes the formation of S-adenosylmethionine (AdoMet) from methionine and ATP. The overall synthetic reaction is composed of two sequential steps, AdoMet formation and the subsequent tripolyphosphate hydrolysis which occurs prior to release of AdoMet from the enzyme. This is S-adenosylmethionine synthase from Geobacillus kaustophilus (strain HTA426).